The following is a 375-amino-acid chain: MSKRDYYEVLGVSKSASKDEIKKAYRKLSKKYHPDINKESGADEKFKEVKEAYEALSDDQKRAQYDQFGHTDPNQGFGGGFGGGGDFGGFGFDDIFSSIFGGGTRRRDPNAPRQGADLQYTMTLSFEDAAFGKETIIEIPREENCETCKGSGAKPGTKPDTCSHCGGSGQLNVEQNTPFGKVVNRRVCHHCEGTGKIIKNKCSDCGGTGKVKKRKKINVTIPAGVDDGQQLRVPGQGEPGVNGGPAGDLFVVFHVRAHEFFERDGDDIYCEMPLTFAQAALGDEVEVPTLHGKVKLKIPAGTQTGTKFRLRGKGVQNVRGYGQGDQHIVVRVVTPTNLTDKQKDIIREFAEVSGNLPDEQEMSFFDKVKRAFKGE.

The J domain maps to aspartate 5–glycine 69. The CR-type zinc-finger motif lies at glycine 132–arginine 214. 8 residues coordinate Zn(2+): cysteine 145, cysteine 148, cysteine 162, cysteine 165, cysteine 188, cysteine 191, cysteine 202, and cysteine 205. CXXCXGXG motif repeat units lie at residues cysteine 145–glycine 152, cysteine 162–glycine 169, cysteine 188–glycine 195, and cysteine 202–glycine 209.

It belongs to the DnaJ family. In terms of assembly, homodimer. It depends on Zn(2+) as a cofactor.

It is found in the cytoplasm. Its function is as follows. Participates actively in the response to hyperosmotic and heat shock by preventing the aggregation of stress-denatured proteins and by disaggregating proteins, also in an autonomous, DnaK-independent fashion. Unfolded proteins bind initially to DnaJ; upon interaction with the DnaJ-bound protein, DnaK hydrolyzes its bound ATP, resulting in the formation of a stable complex. GrpE releases ADP from DnaK; ATP binding to DnaK triggers the release of the substrate protein, thus completing the reaction cycle. Several rounds of ATP-dependent interactions between DnaJ, DnaK and GrpE are required for fully efficient folding. Also involved, together with DnaK and GrpE, in the DNA replication of plasmids through activation of initiation proteins. This chain is Chaperone protein DnaJ, found in Bacillus velezensis (strain DSM 23117 / BGSC 10A6 / LMG 26770 / FZB42) (Bacillus amyloliquefaciens subsp. plantarum).